Reading from the N-terminus, the 431-residue chain is Putative malic acid transport protein (431 aa).

10 helical membrane-spanning segments follow: residues Phe30–Leu50, Gly62–Phe82, Val101–Tyr121, Ile136–Leu156, Ile167–Ala187, Val201–Val221, Gly239–Phe259, Phe284–Val304, Val318–Gly338, and Val346–Leu366. Basic and acidic residues predominate over residues Glu402–Arg424. The disordered stretch occupies residues Glu402–Leu431.

It belongs to the tellurite-resistance/dicarboxylate transporter (TDT) family.

Its subcellular location is the membrane. The polypeptide is Putative malic acid transport protein (Schizosaccharomyces pombe (strain 972 / ATCC 24843) (Fission yeast)).